The sequence spans 153 residues: Cyanate hydratase (153 aa).

Catalysis depends on residues R88, E91, and S114.

The protein belongs to the cyanase family.

The enzyme catalyses cyanate + hydrogencarbonate + 3 H(+) = NH4(+) + 2 CO2. Functionally, catalyzes the reaction of cyanate with bicarbonate to produce ammonia and carbon dioxide. This is Cyanate hydratase from Mycolicibacterium vanbaalenii (strain DSM 7251 / JCM 13017 / BCRC 16820 / KCTC 9966 / NRRL B-24157 / PYR-1) (Mycobacterium vanbaalenii).